The chain runs to 168 residues: Ribosome maturation factor RimM (168 aa).

One can recognise a PRC barrel domain in the interval 96 to 168 (EGDYYWTDLI…IIVVEWDADF (73 aa)).

It belongs to the RimM family. Binds ribosomal protein uS19.

Its subcellular location is the cytoplasm. Its function is as follows. An accessory protein needed during the final step in the assembly of 30S ribosomal subunit, possibly for assembly of the head region. Essential for efficient processing of 16S rRNA. May be needed both before and after RbfA during the maturation of 16S rRNA. It has affinity for free ribosomal 30S subunits but not for 70S ribosomes. This is Ribosome maturation factor RimM from Coxiella burnetii (strain Dugway 5J108-111).